The primary structure comprises 122 residues: Large ribosomal subunit protein bL12 (122 aa).

This sequence belongs to the bacterial ribosomal protein bL12 family. In terms of assembly, homodimer. Part of the ribosomal stalk of the 50S ribosomal subunit. Forms a multimeric L10(L12)X complex, where L10 forms an elongated spine to which 2 to 4 L12 dimers bind in a sequential fashion. Binds GTP-bound translation factors.

Its function is as follows. Forms part of the ribosomal stalk which helps the ribosome interact with GTP-bound translation factors. Is thus essential for accurate translation. In Buchnera aphidicola subsp. Schizaphis graminum (strain Sg), this protein is Large ribosomal subunit protein bL12.